Here is a 360-residue protein sequence, read N- to C-terminus: POU domain, class 5, transcription factor 1 (360 aa).

Disordered regions lie at residues 1-53 (MAGH…GVGP) and 87-117 (QGGL…PCTV). Positions 4–12 (HLASDFAFS) match the 9aaTAD motif. A compositionally biased stretch (gly residues) spans 17–26 (GGGDGPGGPE). Phosphoserine; by MAPK is present on serine 111. Lysine 123 participates in a covalent cross-link: Glycyl lysine isopeptide (Lys-Gly) (interchain with G-Cter in SUMO). A POU-specific domain is found at 138-212 (DIKALQKELE…LLQKWVEEAD (75 aa)). Arginine 157 and glutamine 164 together coordinate DNA. 2 DNA-binding regions span residues 180–186 (SQTTICR) and 193–196 (SFKN). A DNA-binding region (homeobox) is located at residues 230–289 (RKRKRTSIENRVRGSLENLFLQCPKPTLQQISHIAQQLGLEKDVVRVWFCNRRQKGKRSS). Position 235 is a phosphothreonine (threonine 235). A phosphoserine mark is found at serine 236, serine 289, serine 290, and serine 355.

It belongs to the POU transcription factor family. Class-5 subfamily. Interacts with PKM. Interacts with WWP2. Interacts with UBE2I and ZSCAN10. Interacts with PCGF1. Interacts with ESRRB; recruits ESRRB near the POU5F1-SOX2 element in the NANOG proximal promoter; the interaction is DNA independent. Interacts with ZNF322. Interacts with MAPK8 and MAPK9; the interaction allows MAPK8 and MAPK9 to phosphorylate POU5F1 on Ser-355. Interacts (when phosphorylated on Ser-355) with FBXW8. Interacts with FBXW4. Interacts with SOX2 and SOX15; binds synergistically with either SOX2 or SOX15 to DNA. Interacts with DDX56. Sumoylation enhances the protein stability, DNA binding and transactivation activity. Sumoylation is required for enhanced YES1 expression. In terms of processing, ubiquitinated; undergoes 'Lys-63'-linked polyubiquitination by WWP2 leading to proteasomal degradation. Post-translationally, ERK1/2-mediated phosphorylation at Ser-111 promotes nuclear exclusion and proteasomal degradation. Phosphorylation at Thr-235 and Ser-236 decrease DNA-binding and alters ability to activate transcription.

It is found in the cytoplasm. Its subcellular location is the nucleus. Transcription factor that binds to the octamer motif (5'-ATTTGCAT-3'). Forms a trimeric complex with SOX2 or SOX15 on DNA and controls the expression of a number of genes involved in embryonic development such as YES1, FGF4, UTF1 and ZFP206. Critical for early embryogenesis and for embryonic stem cell pluripotency. This Macaca mulatta (Rhesus macaque) protein is POU domain, class 5, transcription factor 1 (POU5F1).